Consider the following 317-residue polypeptide: Acetyl-coenzyme A carboxylase carboxyl transferase subunit alpha (317 aa).

In terms of domain architecture, CoA carboxyltransferase C-terminal spans 40-293 (LEKRSADALK…GDIIAASLRS (254 aa)).

It belongs to the AccA family. Acetyl-CoA carboxylase is a heterohexamer composed of biotin carboxyl carrier protein (AccB), biotin carboxylase (AccC) and two subunits each of ACCase subunit alpha (AccA) and ACCase subunit beta (AccD).

It localises to the cytoplasm. It carries out the reaction N(6)-carboxybiotinyl-L-lysyl-[protein] + acetyl-CoA = N(6)-biotinyl-L-lysyl-[protein] + malonyl-CoA. It functions in the pathway lipid metabolism; malonyl-CoA biosynthesis; malonyl-CoA from acetyl-CoA: step 1/1. Component of the acetyl coenzyme A carboxylase (ACC) complex. First, biotin carboxylase catalyzes the carboxylation of biotin on its carrier protein (BCCP) and then the CO(2) group is transferred by the carboxyltransferase to acetyl-CoA to form malonyl-CoA. This Brucella canis (strain ATCC 23365 / NCTC 10854 / RM-666) protein is Acetyl-coenzyme A carboxylase carboxyl transferase subunit alpha.